We begin with the raw amino-acid sequence, 106 residues long: Probable NADP-dependent dehydrogenase in aabA 3'region (106 aa).

4-28 (LITGASSGFGWEAAKLCVAKGHRVI) provides a ligand contact to NADP(+).

It belongs to the short-chain dehydrogenases/reductases (SDR) family.

The polypeptide is Probable NADP-dependent dehydrogenase in aabA 3'region (Dichelobacter nodosus (Bacteroides nodosus)).